Reading from the N-terminus, the 236-residue chain is Probable chemoreceptor glutamine deamidase CheD (236 aa).

The interval 1-20 (MIEFGKRATPQSAADAVRGD) is disordered.

It belongs to the CheD family.

The enzyme catalyses L-glutaminyl-[protein] + H2O = L-glutamyl-[protein] + NH4(+). Its function is as follows. Probably deamidates glutamine residues to glutamate on methyl-accepting chemotaxis receptors (MCPs), playing an important role in chemotaxis. The chain is Probable chemoreceptor glutamine deamidase CheD from Ralstonia pickettii (strain 12J).